The sequence spans 236 residues: Calcium-binding lectin RapA2 (236 aa).

The protein resides in the secreted. Functionally, interacts specifically in a calcium-dependent manner with the acidic exopolysaccharide (EPS) and capsular polysaccharide produced by R.leguminosarum. Could be involved in the development of the biofilm matrix made of EPS. This chain is Calcium-binding lectin RapA2, found in Rhizobium johnstonii (strain DSM 114642 / LMG 32736 / 3841) (Rhizobium leguminosarum bv. viciae).